Here is a 632-residue protein sequence, read N- to C-terminus: Golgin subfamily A member 8J (632 aa).

The disordered stretch occupies residues 1 to 76 (MAEETQHNKL…TSSATLKDLE (76 aa)). Coiled coils occupy residues 86–154 (LDSR…HMKR) and 220–421 (LKVQ…SLMA). Composition is skewed to basic and acidic residues over residues 352 to 362 (KQEERIQEQHK) and 427 to 440 (HGGE…EEAP). Disordered stretches follow at residues 352–377 (KQEE…FKEP), 423–452 (PGEG…DPES), and 496–524 (LSEP…DEGE). A compositionally biased stretch (gly residues) spans 508 to 520 (LGGGHHQAGAQGG).

The protein belongs to the GOLGA8 family.

The polypeptide is Golgin subfamily A member 8J (GOLGA8J) (Homo sapiens (Human)).